A 185-amino-acid polypeptide reads, in one-letter code: Ribosome-recycling factor (185 aa).

It belongs to the RRF family.

The protein resides in the cytoplasm. Responsible for the release of ribosomes from messenger RNA at the termination of protein biosynthesis. May increase the efficiency of translation by recycling ribosomes from one round of translation to another. The chain is Ribosome-recycling factor from Pseudomonas fluorescens (strain SBW25).